The following is a 385-amino-acid chain: Aliphatic amidase expression-regulating protein (385 aa).

Homodimer. Forms a complex with AmiR.

In terms of biological role, negatively regulates the expression of the aliphatic amidase operon. AmiC functions by inhibiting the action of AmiR at the protein level. It exhibits protein kinase activity. The polypeptide is Aliphatic amidase expression-regulating protein (amiC) (Pseudomonas aeruginosa (strain ATCC 15692 / DSM 22644 / CIP 104116 / JCM 14847 / LMG 12228 / 1C / PRS 101 / PAO1)).